The sequence spans 648 residues: A-type voltage-gated potassium channel KCND1 (648 aa).

Topologically, residues 1-183 (MAAGVATWLP…RAFENPHTST (183 aa)) are cytoplasmic. The segment at 2 to 20 (AAGVATWLPFARAAAVGWL) is interaction with KCNIP1, KCNIP2, and other family members. An interaction with KCNIP2 region spans residues 2 to 20 (AAGVATWLPFARAAAVGWL). Residues His-104, Cys-131, and Cys-132 each coordinate Zn(2+). Residues 144-164 (AERLAEDEEAEQAGDGPTLPA) are disordered. The chain crosses the membrane as a helical span at residues 184–205 (AALVFYYVTGFFIAVSVIANVV). Residues 206 to 230 (ETIPCRSPTRRPPREQPCGDRFPLA) are Extracellular-facing. A helical membrane pass occupies residues 231-252 (FFCMDTACVLIFTGEYLLRLFA). Residues 253-263 (APSRCRFLRSV) lie on the Cytoplasmic side of the membrane. A helical transmembrane segment spans residues 264 to 284 (MSLIDVVAILPYYIGLFMPKN). The Extracellular segment spans residues 285 to 287 (EDV). The helical; Voltage-sensor transmembrane segment at 288-308 (SGAFVTLRVFRVFRIFKFSRH) threads the bilayer. Over 309–323 (SQGLRILGYTLKSCA) the chain is Cytoplasmic. The interval 310–323 (QGLRILGYTLKSCA) is S4-S5 linker. The chain crosses the membrane as a helical span at residues 324-345 (SELGFLLFSLTMAIIIFATVMF). At 346-359 (YAEKGTNKTNFTSI) the chain is on the extracellular side. N-linked (GlcNAc...) asparagine glycosylation is found at Asn-352 and Asn-355. The segment at residues 360-371 (PAAFWYTIVTMT) is an intramembrane region (helical). The short motif at 372-377 (TLGYGD) is the Selectivity filter element. Residues 372 to 379 (TLGYGDMV) lie within the membrane without spanning it. Residues 380–386 (PSTIAGK) lie on the Extracellular side of the membrane. The helical transmembrane segment at 387-415 (IFGSICSLSGVLVIALPVPVIVSNFSRIY) threads the bilayer. Residues 416–648 (HQNQRADKRR…LPETVKISSL (233 aa)) are Cytoplasmic-facing. Position 458 is a phosphoserine (Ser-458). A mediates dendritic targeting region spans residues 474-489 (FEQQHHHLLHCLEKTT). The segment at 474-489 (FEQQHHHLLHCLEKTT) is required for dendritic targeting. Ser-555 is subject to Phosphoserine. The tract at residues 601–636 (IPTPPANTPDESQPSSPGGGGGGASSTLRNSSLGTP) is disordered.

This sequence belongs to the potassium channel family. D (Shal) (TC 1.A.1.2) subfamily. Kv4.1/KCND1 sub-subfamily. Component of heteromultimeric potassium channels. Identified in potassium channel complexes containing KCND1, KCND2, KCND3, KCNIP1, KCNIP2, KCNIP3, KCNIP4, DPP6 and DPP10.

It localises to the cell membrane. It catalyses the reaction K(+)(in) = K(+)(out). A-type voltage-gated potassium channel that mediates transmembrane potassium transport in excitable membranes in the brain. Mediates A-type current I(SA) in suprachiasmatic nucleus (SCN) neurons. Exhibits a low-threshold A-type current with a hyperpolarized steady-state inactivation midpoint and the recovery process was steeply voltage-dependent, with recovery being markedly faster at more negative potentials. May regulates repetitive firing rates in the suprachiasmatic nucleus (SCN) neurons and circadian rhythms in neuronal excitability and behavior. Contributes to the regulation of the circadian rhythm of action potential firing in suprachiasmatic nucleus neurons, which regulates the circadian rhythm of locomotor activity. The regulatory subunit KCNIP1 modulates the kinetics of channel inactivation, increases the current amplitudes and accelerates recovery from inactivation, shifts activation in a depolarizing direction. The regulatory subunit DPP10 decreases the voltage sensitivity of the inactivation channel gating. The sequence is that of A-type voltage-gated potassium channel KCND1 from Bos taurus (Bovine).